Here is a 137-residue protein sequence, read N- to C-terminus: Large ribosomal subunit protein uL16 (137 aa).

Belongs to the universal ribosomal protein uL16 family. As to quaternary structure, part of the 50S ribosomal subunit.

Its function is as follows. Binds 23S rRNA and is also seen to make contacts with the A and possibly P site tRNAs. The polypeptide is Large ribosomal subunit protein uL16 (Methylocella silvestris (strain DSM 15510 / CIP 108128 / LMG 27833 / NCIMB 13906 / BL2)).